Reading from the N-terminus, the 502-residue chain is ATP synthase subunit alpha, chloroplastic (502 aa).

170–177 (GDRQTGKT) lines the ATP pocket.

Belongs to the ATPase alpha/beta chains family. In terms of assembly, F-type ATPases have 2 components, CF(1) - the catalytic core - and CF(0) - the membrane proton channel. CF(1) has five subunits: alpha(3), beta(3), gamma(1), delta(1), epsilon(1). CF(0) has four main subunits: a, b, b' and c.

Its subcellular location is the plastid. The protein resides in the chloroplast thylakoid membrane. The enzyme catalyses ATP + H2O + 4 H(+)(in) = ADP + phosphate + 5 H(+)(out). In terms of biological role, produces ATP from ADP in the presence of a proton gradient across the membrane. The alpha chain is a regulatory subunit. This Rhodomonas salina (Cryptomonas salina) protein is ATP synthase subunit alpha, chloroplastic.